We begin with the raw amino-acid sequence, 92 residues long: Serine protease inhibitor I/II (92 aa).

An N-terminal signal peptide occupies residues 1-19 (MKLALALCAAFLLVVLVQA). Pacifastin domains lie at 20 to 54 (EQECTPGQTKKQDCNTCNCTPTGVWACTRKGCPPH) and 57 to 92 (EVTCEPGTTFKDKCNTCRCGSDGKSAACTLKACPQK). 6 disulfide bridges follow: C23–C38, C33–C51, C36–C46, C60–C75, C70–C89, and C73–C84.

This sequence belongs to the protease inhibitor I19 family. In terms of tissue distribution, expressed in hemolymph, ovaries, testes and fat body of adults but are absent in the gut. Also present in larval hemolymph and fat body.

It is found in the secreted. In terms of biological role, in vitro, is active against alpha-chymotrypsin and trypsin. Functionally, in vitro, is active against alpha-chymotrypsin and pancreatic elastase. The chain is Serine protease inhibitor I/II from Schistocerca gregaria (Desert locust).